The sequence spans 77 residues: Large ribosomal subunit protein bL31 (77 aa).

Belongs to the bacterial ribosomal protein bL31 family. Type A subfamily. Part of the 50S ribosomal subunit.

Binds the 23S rRNA. This chain is Large ribosomal subunit protein bL31, found in Paramagnetospirillum magneticum (strain ATCC 700264 / AMB-1) (Magnetospirillum magneticum).